We begin with the raw amino-acid sequence, 43 residues long: Thaumatin-like protein 1 (43 aa).

This sequence belongs to the thaumatin family.

This is Thaumatin-like protein 1 from Glebionis coronaria (Crown daisy).